Consider the following 54-residue polypeptide: Conotoxin vc5a (54 aa).

A signal peptide spans 1–14 (VILLLITSTPSVDA). Positions 15–42 (RLKAKDNMPLASFHDNAKRTLQTRLINT) are excised as a propeptide. Position 49 is a 4-hydroxyproline (P49). Position 53 is an isoleucine amide (I53).

The protein belongs to the conotoxin T superfamily. Contains 2 disulfide bonds that can be either 'C1-C3, C2-C4' or 'C1-C4, C2-C3', since these disulfide connectivities have been observed for conotoxins with cysteine framework V (for examples, see AC P0DQQ7 and AC P81755). In terms of tissue distribution, expressed by the venom duct.

It is found in the secreted. This is Conotoxin vc5a from Conus victoriae (Queen Victoria cone).